Here is a 512-residue protein sequence, read N- to C-terminus: Ferrochelatase-2, chloroplastic (512 aa).

A disordered region spans residues 1-32; it reads MNCPAMTASPSSSSSSSYSTFRPPPPLLPQLS. Residues 1–83 constitute a chloroplast transit peptide; the sequence is MNCPAMTASP…SNPLNISSSS (83 aa). Low complexity predominate over residues 9–21; that stretch reads SPSSSSSSSYSTF. Residue Val-84 is modified to N-acetylvaline.

It belongs to the ferrochelatase family. In terms of tissue distribution, expressed in leaves and flowers.

It localises to the plastid. Its subcellular location is the chloroplast membrane. The protein localises to the chloroplast thylakoid membrane. It carries out the reaction heme b + 2 H(+) = protoporphyrin IX + Fe(2+). The protein operates within porphyrin-containing compound metabolism; protoheme biosynthesis; protoheme from protoporphyrin-IX: step 1/1. In terms of biological role, catalyzes the last step of heme biosynthesis by inserting ferrous iron into protoporphyrin IX to produce protoheme. Produces heme for photosynthetic cytochromes, and for proteins involved in abiotic and biotic stress responses. May play a role in the quality control of individual chloroplasts during photo-oxidative stress through regulation of heme biosynthesis. In Arabidopsis thaliana (Mouse-ear cress), this protein is Ferrochelatase-2, chloroplastic.